Reading from the N-terminus, the 273-residue chain is Peptide deformylase 1B, chloroplastic/mitochondrial (273 aa).

A chloroplast and mitochondrion-targeting transit peptide spans 1 to 56 (MAVCNCFLQAPPLSRILLPVLSRRATTLSAGYGRLKSTVTFCSTVNRTSPLTSSVR). Fe cation is bound by residues C171 and H213. Residue E214 is part of the active site. H217 serves as a coordination point for Fe cation. Positions 246 to 261 (YEEKTGLPSPERVEAR) are enriched in basic and acidic residues. The interval 246-273 (YEEKTGLPSPERVEARQKRKAGVGFGKR) is disordered. The segment covering 262-273 (QKRKAGVGFGKR) has biased composition (basic residues).

The protein belongs to the polypeptide deformylase family. As to quaternary structure, homodimer. Requires Fe(2+) as cofactor. As to expression, expressed in leaves and flowers.

It localises to the plastid. The protein localises to the chloroplast stroma. The protein resides in the mitochondrion. The catalysed reaction is N-terminal N-formyl-L-methionyl-[peptide] + H2O = N-terminal L-methionyl-[peptide] + formate. Inhibited by actinonin. In terms of biological role, removes the formyl group from the N-terminal Met of newly synthesized proteins. Has a preferred substrate specificity towards the photosystem II (PS II) D1 polypeptide. The polypeptide is Peptide deformylase 1B, chloroplastic/mitochondrial (PDF1B) (Arabidopsis thaliana (Mouse-ear cress)).